We begin with the raw amino-acid sequence, 158 residues long: Serine-protein kinase RsbW (158 aa).

The protein belongs to the anti-sigma-factor family.

The enzyme catalyses L-seryl-[protein] + ATP = O-phospho-L-seryl-[protein] + ADP + H(+). It catalyses the reaction L-threonyl-[protein] + ATP = O-phospho-L-threonyl-[protein] + ADP + H(+). Its function is as follows. Negative regulator of sigma-B activity. Phosphorylates and inactivates its specific antagonist protein, RsbV. Upon phosphorylation of RsbV, RsbW is released and binds to sigma-B, thereby blocking its ability to form an RNA polymerase holoenzyme (E-sigma-B). The sequence is that of Serine-protein kinase RsbW from Oceanobacillus iheyensis (strain DSM 14371 / CIP 107618 / JCM 11309 / KCTC 3954 / HTE831).